Reading from the N-terminus, the 251-residue chain is uncharacterized protein (251 aa).

Residues 1–18 (MKILIILSIILCSLFGRA) form the signal peptide.

This sequence belongs to the MlaA family.

This is an uncharacterized protein from Rickettsia prowazekii (strain Madrid E).